Reading from the N-terminus, the 286-residue chain is Nucleoid occlusion protein (286 aa).

The segment at residues 147-166 (EALAQRLGKNQSTVANKLRL) is a DNA-binding region (H-T-H motif).

It belongs to the ParB family.

It is found in the cytoplasm. Its subcellular location is the nucleoid. Effects nucleoid occlusion by binding relatively nonspecifically to DNA and preventing the assembly of the division machinery in the vicinity of the nucleoid, especially under conditions that disturb the cell cycle. It helps to coordinate cell division and chromosome segregation by preventing the formation of the Z ring through the nucleoid, which would cause chromosome breakage. The polypeptide is Nucleoid occlusion protein (Oceanobacillus iheyensis (strain DSM 14371 / CIP 107618 / JCM 11309 / KCTC 3954 / HTE831)).